A 223-amino-acid chain; its full sequence is Ribose-5-phosphate isomerase A (223 aa).

Substrate-binding positions include 32 to 35 (TGST), 83 to 86 (DGAD), and 96 to 99 (KGGG). Glutamate 105 functions as the Proton acceptor in the catalytic mechanism. Residue lysine 123 participates in substrate binding.

This sequence belongs to the ribose 5-phosphate isomerase family. As to quaternary structure, homodimer.

The catalysed reaction is aldehydo-D-ribose 5-phosphate = D-ribulose 5-phosphate. It participates in carbohydrate degradation; pentose phosphate pathway; D-ribose 5-phosphate from D-ribulose 5-phosphate (non-oxidative stage): step 1/1. In terms of biological role, catalyzes the reversible conversion of ribose-5-phosphate to ribulose 5-phosphate. This is Ribose-5-phosphate isomerase A from Acinetobacter baumannii (strain AYE).